Consider the following 602-residue polypeptide: Glutamyl-tRNA(Gln) amidotransferase subunit B, mitochondrial (602 aa).

The transit peptide at 1 to 56 (MFRSCLRHCRRATVRSRTCPRCSHHEIPQLQVVQRQISLSSSFPHIRRLQTSSTDT) directs the protein to the mitochondrion.

The protein belongs to the GatB/GatE family. GatB subfamily. In terms of assembly, subunit of the heterotrimeric GatCAB amidotransferase (AdT) complex, composed of A, B and C subunits.

The protein resides in the mitochondrion. The enzyme catalyses L-glutamyl-tRNA(Gln) + L-glutamine + ATP + H2O = L-glutaminyl-tRNA(Gln) + L-glutamate + ADP + phosphate + H(+). Functionally, allows the formation of correctly charged Gln-tRNA(Gln) through the transamidation of misacylated Glu-tRNA(Gln) in the mitochondria. The reaction takes place in the presence of glutamine and ATP through an activated gamma-phospho-Glu-tRNA(Gln). The protein is Glutamyl-tRNA(Gln) amidotransferase subunit B, mitochondrial (nempA) of Emericella nidulans (strain FGSC A4 / ATCC 38163 / CBS 112.46 / NRRL 194 / M139) (Aspergillus nidulans).